The sequence spans 480 residues: MKISREKWSSNFSEWFDWVISQAEIYDYGRYPVKGSGVWMPYGFKIRQNVTTLIRKLLDETGHEEVLFPLLIPETLLKKEAEHIKGFEKEVFWVTHGGEDELEERFALRPTSEVAITLMESLWIKGYSQLPRKFYQIVSVFRYETKATRPMIRVRELSTFKEAHTVHETFEDAARQVDEAVEIYSKFFDILGIPYLISRRPEWDKFAGAEYTIALDTIMPDGRALQIGTAHHLGQHFTKAMDYKVQRADGSHVHPHQTSYGISDRVIATVISINGDDHGPILPPVVAPIEGVIIPIPGKSEEDTEKINKYAMEVESVLKNSGIRVALDASEDKTPGEKYYIWELKGVPIRIEIGPRELNSGTAFLKRRDTLEGKSVKREELVKEFRNLEDQISADLRKRAWEQFKERVKRFQSLDEAKKFLENRGGIAEVPWCGQDSCGLKIEEQVQARVLGTPLKPEPSGNCVVCGKPSTNILRIAKTY.

This sequence belongs to the class-II aminoacyl-tRNA synthetase family. ProS type 3 subfamily. As to quaternary structure, homodimer.

Its subcellular location is the cytoplasm. It carries out the reaction tRNA(Pro) + L-proline + ATP = L-prolyl-tRNA(Pro) + AMP + diphosphate. Functionally, catalyzes the attachment of proline to tRNA(Pro) in a two-step reaction: proline is first activated by ATP to form Pro-AMP and then transferred to the acceptor end of tRNA(Pro). The polypeptide is Proline--tRNA ligase (Metallosphaera sedula (strain ATCC 51363 / DSM 5348 / JCM 9185 / NBRC 15509 / TH2)).